Reading from the N-terminus, the 330-residue chain is Aspartate--ammonia ligase (330 aa).

Belongs to the class-II aminoacyl-tRNA synthetase family. AsnA subfamily.

Its subcellular location is the cytoplasm. It catalyses the reaction L-aspartate + NH4(+) + ATP = L-asparagine + AMP + diphosphate + H(+). The protein operates within amino-acid biosynthesis; L-asparagine biosynthesis; L-asparagine from L-aspartate (ammonia route): step 1/1. This Streptococcus thermophilus (strain ATCC BAA-250 / LMG 18311) protein is Aspartate--ammonia ligase.